The sequence spans 178 residues: Alkyl hydroperoxide reductase AhpD (178 aa).

The active-site Proton donor is the Cys-130. A disulfide bond links Cys-130 and Cys-133. Cys-133 serves as the catalytic Cysteine sulfenic acid (-SOH) intermediate.

The protein belongs to the AhpD family. In terms of assembly, homotrimer.

The catalysed reaction is N(6)-[(R)-dihydrolipoyl]-L-lysyl-[lipoyl-carrier protein] + a hydroperoxide = N(6)-[(R)-lipoyl]-L-lysyl-[lipoyl-carrier protein] + an alcohol + H2O. Antioxidant protein with alkyl hydroperoxidase activity. Required for the reduction of the AhpC active site cysteine residues and for the regeneration of the AhpC enzyme activity. This is Alkyl hydroperoxide reductase AhpD from Mycobacterium marinum (strain ATCC BAA-535 / M).